A 980-amino-acid polypeptide reads, in one-letter code: MTMITPSSKLTLTKGNKSWSSTRCGAFLLLHLVLQPWQRAGAQATPQVFDLLPSSSQRLNPAALQPVLTDPTLHELYVISTFKLQSKSSATIFGLYSSSDNSKYFEFTVMGRLNKAILRYLKDDGKIHLVVFNNLQLADGRRHRILLRLSNLQRGAGSVELYLDCVQVDSVNNLPRAFSGLTQNPQAIELRTFQRKPQDFLEELKLVVRGSLFQVASLQDCFLQQSEPLAATGTGDFNRQFLGQMTQLNQLLGEVKDLLRQQVKETSFLRNTIAECQACGPLSFQSPTPNTLVPIAPPAPPTRPTRRCDSSPCFRGVRCTDTRDGFQCGPCPDGYTGNGITCSDVDECKYHPCYPGVRCTNLAPGFRCDACPVGFTGPMVQGVGINFAKTNKQVCTDVDECRNGACVLNSICINTLGSYRCGPCKPGYTGDQTRGCRTERSCRNPEQNPCSVHAQCIEERQGDVTCVCGVGWAGRAGYVCGKDVDIDSYPDEELPCSARNCKKDNCKYVPNSGQEDADRDGIGDACDEDADGDGILNEQDNCVLTHNVDQRNTDKDIFGDACDNCRGVLNNDQKDTDGDGKGDACDDDMDGDGIKNILDNCPRVPNRDQQDRDGDGVGDACDSCPDVSNPNQSDVDNDLVGDSCDTNQDSDGDGHQDSTDNCPTVINSAQLDTDKDGIGDECDDDDDNDGMPDLFPPGPDNCRLVPNPAQEDSNNDGVGDICEADFDQDKVIDRIDVCPENAEITLTDFRAYQTVVLDPEGDAQIDPNWVVLNQGMEIVQTMNSDPGLAVGYTAFNGVDFEGTFHVNTQTDDDYAGFIFGYQDSSSFYVVMWKQTEQTYWQATPFRAVAEPGIQLKAVKSKTGPGEHLRNSLWHTGDTSDQVRLLWKDSRNVGWKDKVSYRWFLQHRPQVGYIRVRFYEGSELVADSGVTIDTTMRGGRLGVFCFSQENIIWSNLKYRCNDTIPEDFQEFQIQTFDRLDN.

A signal peptide spans 1-42 (MTMITPSSKLTLTKGNKSWSSTRCGAFLLLHLVLQPWQRAGA). One can recognise a Laminin G-like domain in the interval 43 to 210 (QATPQVFDLL…LEELKLVVRG (168 aa)). Residues 304-343 (PTRRCDSSPCFRGVRCTDTRDGFQCGPCPDGYTGNGITCS) form the EGF-like 1 domain. 21 cysteine pairs are disulfide-bonded: Cys308-Cys319, Cys313-Cys328, Cys331-Cys342, Cys348-Cys359, Cys353-Cys368, Cys371-Cys395, Cys401-Cys412, Cys406-Cys421, Cys424-Cys436, Cys442-Cys456, Cys450-Cys466, Cys468-Cys480, Cys496-Cys501, Cys506-Cys526, Cys542-Cys562, Cys565-Cys585, Cys601-Cys621, Cys624-Cys644, Cys662-Cys682, Cys702-Cys722, and Cys738-Cys959. One can recognise an EGF-like 2; calcium-binding domain in the interval 344-381 (DVDECKYHPCYPGVRCTNLAPGFRCDACPVGFTGPMVQ). An EGF-like 3; calcium-binding domain is found at 397–434 (DVDECRNGACVLNSICINTLGSYRCGPCKPGYTGDQTR). The EGF-like 4 domain maps to 438–481 (TERSCRNPEQNPCSVHAQCIEERQGDVTCVCGVGWAGRAGYVCG). TSP type-3 repeat units lie at residues 482 to 514 (KDVD…NSGQ), 515 to 550 (EDAD…NVDQ), 551 to 573 (RNTD…NNDQ), 574 to 609 (KDTD…NRDQ), 610 to 632 (QDRD…NPNQ), 633 to 670 (SDVD…NSAQ), 671 to 710 (LDTD…NPAQ), and 711 to 746 (EDSN…EITL). The tract at residues 596-691 (NILDNCPRVP…CDDDDDNDGM (96 aa)) is disordered. The segment covering 605–615 (PNRDQQDRDGD) has biased composition (basic and acidic residues). Residue Asn631 is glycosylated (N-linked (GlcNAc...) asparagine). The span at 659–671 (TDNCPTVINSAQL) shows a compositional bias: polar residues. A compositionally biased stretch (acidic residues) spans 679 to 690 (GDECDDDDDNDG). The TSP C-terminal domain occupies 750–964 (RAYQTVVLDP…LKYRCNDTIP (215 aa)). Asn960 carries an N-linked (GlcNAc...) asparagine glycan.

Belongs to the thrombospondin family. Homopentamer; disulfide-linked. Interacts with PTBP3. Interacts (via EGF-like 3; calcium-binding domain) with ATF6 and facilitates its processing, activation and nuclear translocation. Interacts with NOTCH1. As to expression, mainly expressed in astrocytes, and in ressponse to peripheral nerve injury, significantly up-regulated in the dorsal spinal cord (at protein level).

Its subcellular location is the endoplasmic reticulum. It is found in the sarcoplasmic reticulum. The protein resides in the secreted. The protein localises to the extracellular space. It localises to the extracellular matrix. Functionally, adhesive glycoprotein that mediates cell-to-cell and cell-to-matrix interactions and is involved in various processes including cellular proliferation, migration, adhesion and attachment, inflammatory response to CNS injury, regulation of vascular inflammation and adaptive responses of the heart to pressure overload and in myocardial function and remodeling. Binds to structural extracellular matrix (ECM) proteins and modulates the ECM in response to tissue damage, contributing to cardioprotective and adaptive ECM remodeling. Plays a role in ER stress response, via its interaction with the activating transcription factor 6 alpha (ATF6) which produces adaptive ER stress response factors and protects myocardium from pressure overload. May contribute to spinal presynaptic hypersensitivity and neuropathic pain states after peripheral nerve injury. May play a role in regulating protective astrogenesis from the subventricular zone (SVZ) niche after injury in a NOTCH1-dependent manner. In Rattus norvegicus (Rat), this protein is Thrombospondin-4 (Thbs4).